An 808-amino-acid chain; its full sequence is Glycerol-3-phosphate acyltransferase (808 aa).

The HXXXXD motif motif lies at 306 to 311 (HRSHMD).

It belongs to the GPAT/DAPAT family.

The protein resides in the cell inner membrane. It catalyses the reaction sn-glycerol 3-phosphate + an acyl-CoA = a 1-acyl-sn-glycero-3-phosphate + CoA. It functions in the pathway phospholipid metabolism; CDP-diacylglycerol biosynthesis; CDP-diacylglycerol from sn-glycerol 3-phosphate: step 1/3. The protein is Glycerol-3-phosphate acyltransferase of Vibrio parahaemolyticus serotype O3:K6 (strain RIMD 2210633).